The following is a 359-amino-acid chain: 5-amino-6-(D-ribitylamino)uracil--L-tyrosine 4-hydroxyphenyl transferase (359 aa).

The region spanning Val45–Lys282 is the Radical SAM core domain. Residues Cys59, Cys63, and Cys66 each contribute to the [4Fe-4S] cluster site.

This sequence belongs to the radical SAM superfamily. CofH family. Consists of two subunits, CofG and CofH. [4Fe-4S] cluster is required as a cofactor.

The catalysed reaction is 5-amino-6-(D-ribitylamino)uracil + L-tyrosine + S-adenosyl-L-methionine = 5-amino-5-(4-hydroxybenzyl)-6-(D-ribitylimino)-5,6-dihydrouracil + 2-iminoacetate + 5'-deoxyadenosine + L-methionine + H(+). It participates in cofactor biosynthesis; coenzyme F0 biosynthesis. Its function is as follows. Catalyzes the radical-mediated synthesis of 5-amino-5-(4-hydroxybenzyl)-6-(D-ribitylimino)-5,6-dihydrouracil from 5-amino-6-(D-ribitylamino)uracil and L-tyrosine. This Methanococcus maripaludis (strain C6 / ATCC BAA-1332) protein is 5-amino-6-(D-ribitylamino)uracil--L-tyrosine 4-hydroxyphenyl transferase.